Here is a 336-residue protein sequence, read N- to C-terminus: Dihydroorotate dehydrogenase (quinone) (336 aa).

Residues 62 to 66 (AGLDK) and threonine 86 contribute to the FMN site. Residue lysine 66 coordinates substrate. Substrate is bound at residue 111 to 115 (NRMGF). FMN is bound by residues asparagine 139 and asparagine 172. Asparagine 172 contributes to the substrate binding site. Serine 175 functions as the Nucleophile in the catalytic mechanism. Asparagine 177 contacts substrate. The FMN site is built by lysine 217 and threonine 245. 246-247 (NT) lines the substrate pocket. FMN is bound by residues glycine 268, glycine 297, and 318-319 (YS).

The protein belongs to the dihydroorotate dehydrogenase family. Type 2 subfamily. As to quaternary structure, monomer. FMN is required as a cofactor.

It is found in the cell membrane. It carries out the reaction (S)-dihydroorotate + a quinone = orotate + a quinol. The protein operates within pyrimidine metabolism; UMP biosynthesis via de novo pathway; orotate from (S)-dihydroorotate (quinone route): step 1/1. Functionally, catalyzes the conversion of dihydroorotate to orotate with quinone as electron acceptor. The polypeptide is Dihydroorotate dehydrogenase (quinone) (Pectobacterium atrosepticum (strain SCRI 1043 / ATCC BAA-672) (Erwinia carotovora subsp. atroseptica)).